A 156-amino-acid chain; its full sequence is Large ribosomal subunit protein uL15 (156 aa).

The interval 26-46 (GIGCGKGKTSGRGHKGQKARS) is disordered. Residues 34-43 (TSGRGHKGQK) are compositionally biased toward basic residues.

The protein belongs to the universal ribosomal protein uL15 family. As to quaternary structure, part of the 50S ribosomal subunit.

Binds to the 23S rRNA. The polypeptide is Large ribosomal subunit protein uL15 (Ehrlichia canis (strain Jake)).